We begin with the raw amino-acid sequence, 527 residues long: Bifunctional methyltransferase (527 aa).

The segment at 1–309 is hemK; sequence MQYSIKQVLS…GHSRVILFSP (309 aa). An RF MTase region spans residues 1–311; sequence MQYSIKQVLS…SRVILFSPIN (311 aa). S-adenosyl-L-methionine-binding positions include 149–153, Asp-172, Trp-201, Asn-216, Glu-356, Glu-381, Asn-408, and Asp-430; that span reads GTGSG. 216–219 is a binding site for substrate; sequence NPPY. The segment at 310-527 is tRNA (guanine-N(7)-)-methyltransferase; it reads INLNRSYARR…IILQHVSGDH (218 aa). The tRNA MTase stretch occupies residues 314-527; that stretch reads RSYARRIGKS…IILQHVSGDH (214 aa). The active site involves Asp-430. Substrate-binding residues include Lys-434 and Asp-466.

This sequence in the C-terminal section; belongs to the class I-like SAM-binding methyltransferase superfamily. TrmB family. The protein in the N-terminal section; belongs to the protein N5-glutamine methyltransferase family. PrmC subfamily.

The catalysed reaction is L-glutaminyl-[peptide chain release factor] + S-adenosyl-L-methionine = N(5)-methyl-L-glutaminyl-[peptide chain release factor] + S-adenosyl-L-homocysteine + H(+). It carries out the reaction guanosine(46) in tRNA + S-adenosyl-L-methionine = N(7)-methylguanosine(46) in tRNA + S-adenosyl-L-homocysteine. Functionally, methylates the class 1 translation termination release factors RF1/PrfA and RF2/PrfB on the glutamine residue of the universally conserved GGQ motif. Its function is as follows. Catalyzes the formation of N(7)-methylguanine at position 46 (m7G46) in tRNA. This chain is Bifunctional methyltransferase (prmC/trmB), found in Rickettsia felis (strain ATCC VR-1525 / URRWXCal2) (Rickettsia azadi).